The sequence spans 97 residues: Small ribosomal subunit protein uS17 (97 aa).

Residues 1–20 (MSEATVNDNAAVKNEKGARK) are disordered.

The protein belongs to the universal ribosomal protein uS17 family. Part of the 30S ribosomal subunit.

One of the primary rRNA binding proteins, it binds specifically to the 5'-end of 16S ribosomal RNA. The polypeptide is Small ribosomal subunit protein uS17 (Corynebacterium jeikeium (strain K411)).